Here is a 1001-residue protein sequence, read N- to C-terminus: Translation initiation factor IF-2 (1001 aa).

The segment at 56 to 418 (PDYVHDPNAV…VEAGPPPISR (363 aa)) is disordered. Positions 70 to 84 (TEAHEERHEHEEAHE) are enriched in basic and acidic residues. A compositionally biased stretch (low complexity) spans 85–108 (PAAAPKAAVEPETPVAPAPEAAPA). The span at 109-120 (AKEERPAPEEPA) shows a compositional bias: basic and acidic residues. Pro residues-rich tracts occupy residues 136 to 170 (IHPP…PHAP), 180 to 194 (PARP…PSQT), 204 to 217 (RPAP…PTTT), 229 to 252 (QPFP…PPQQ), 305 to 322 (PAAP…PVPG), and 345 to 357 (GMPP…PRPQ). Positions 379-410 (SRGRPGDRRPVRQQRERTEEEKILRPQRRHVE) are enriched in basic and acidic residues. In terms of domain architecture, tr-type G spans 499–668 (RRAPVVTIMG…LLVADMQDLK (170 aa)). A G1 region spans residues 508–515 (GHVDHGKT). 508–515 (GHVDHGKT) is a GTP binding site. The segment at 533–537 (GITQH) is G2. Residues 554–557 (DTPG) are G3. GTP is bound by residues 554-558 (DTPGH) and 608-611 (NKID). Positions 608–611 (NKID) are G4. Positions 644 to 646 (SAR) are G5.

It belongs to the TRAFAC class translation factor GTPase superfamily. Classic translation factor GTPase family. IF-2 subfamily.

It is found in the cytoplasm. One of the essential components for the initiation of protein synthesis. Protects formylmethionyl-tRNA from spontaneous hydrolysis and promotes its binding to the 30S ribosomal subunits. Also involved in the hydrolysis of GTP during the formation of the 70S ribosomal complex. The protein is Translation initiation factor IF-2 of Solibacter usitatus (strain Ellin6076).